The following is a 117-amino-acid chain: uncharacterized protein (117 aa).

Positions 1–20 (METKKLIGKPLQPARPVRHL) are disordered.

This is an uncharacterized protein from Homo sapiens (Human).